The following is a 316-amino-acid chain: BTB/POZ domain-containing protein Y57A10B.3 (316 aa).

The signal sequence occupies residues 1–21 (MSAMRRCTCFIICLLTSYTYG). Asn91, Asn107, Asn118, Asn133, Asn191, and Asn260 each carry an N-linked (GlcNAc...) asparagine glycan. One can recognise a BTB domain in the interval 158 to 226 (RDAVLIVEGK…VHSTATFPND (69 aa)).

The protein localises to the secreted. The sequence is that of BTB/POZ domain-containing protein Y57A10B.3 (btb-14) from Caenorhabditis elegans.